A 279-amino-acid chain; its full sequence is Undecaprenyl-diphosphatase (279 aa).

A run of 8 helical transmembrane segments spans residues 2 to 22 (LFIE…TEWL), 44 to 64 (AFME…VIVI), 85 to 105 (WQLW…AVPL), 113 to 133 (FNHM…FLWI), 163 to 183 (VLSI…AIIL), 188 to 208 (TVAA…YSGL), 225 to 245 (LLVL…VIKL), and 255 to 275 (FTVF…YSVF).

Belongs to the UppP family.

It is found in the cell membrane. The enzyme catalyses di-trans,octa-cis-undecaprenyl diphosphate + H2O = di-trans,octa-cis-undecaprenyl phosphate + phosphate + H(+). Functionally, catalyzes the dephosphorylation of undecaprenyl diphosphate (UPP). Confers resistance to bacitracin. The polypeptide is Undecaprenyl-diphosphatase (Streptococcus equi subsp. zooepidemicus (strain MGCS10565)).